A 456-amino-acid polypeptide reads, in one-letter code: Protein king tubby (456 aa).

Residues 111–202 (HELEDEESSP…SNGAGGESEG (92 aa)) are disordered. Polar residues predominate over residues 120–152 (PVTVIEQQQTAPHSANSTHSQRPSTTRQPSFND). Position 149 is a phosphoserine (Ser-149).

This sequence belongs to the TUB family.

It localises to the cytoplasm. Its subcellular location is the nucleus. The protein resides in the cell projection. It is found in the cilium membrane. The protein localises to the rhabdomere. The sequence is that of Protein king tubby from Drosophila pseudoobscura pseudoobscura (Fruit fly).